Consider the following 100-residue polypeptide: Large ribosomal subunit protein uL23 (100 aa).

Belongs to the universal ribosomal protein uL23 family. Part of the 50S ribosomal subunit. Contacts protein L29, and trigger factor when it is bound to the ribosome.

One of the early assembly proteins it binds 23S rRNA. One of the proteins that surrounds the polypeptide exit tunnel on the outside of the ribosome. Forms the main docking site for trigger factor binding to the ribosome. In Prochlorococcus marinus (strain MIT 9313), this protein is Large ribosomal subunit protein uL23.